A 93-amino-acid chain; its full sequence is Islet amyloid polypeptide (93 aa).

Residues Met1–Ala23 form the signal peptide. A propeptide spanning residues Thr24–Asp35 is cleaved from the precursor. Residues Cys39 and Cys44 are joined by a disulfide bond. Tyr74 bears the Tyrosine amide mark. Positions Asn78 to Leu93 are excised as a propeptide.

It belongs to the calcitonin family. In terms of assembly, can form homodimers. Interacts with IDE and INS. Interaction with INS inhibits homodimerization and fibril formation. Abundant in the islets of Langerhans but is not present in the brain or seven other tissues examined.

The protein resides in the secreted. Amylin/IAPP is a glucoregulatory peptide hormone that plays an important role in the regulation of energy homeostasis. Selectively inhibits insulin-stimulated glucose utilization and glycogen deposition in muscle, while not affecting adipocyte glucose metabolism. IAPP function is mediated by the CALCR-RAMPs (AMYRs) receptor complexes. Amylin can also bind CALCR receptor in the absence of RAMPs, although it is more selective for AMYRs. In Rattus norvegicus (Rat), this protein is Islet amyloid polypeptide.